A 530-amino-acid chain; its full sequence is Ubiquitin carboxyl-terminal hydrolase 17-like protein 18 (530 aa).

Residues 80-375 enclose the USP domain; sequence AGLQNMGNTC…QAYVLFYIQK (296 aa). Cys89 acts as the Nucleophile in catalysis. His334 (proton acceptor) is an active-site residue. 2 stretches are compositionally biased toward basic and acidic residues: residues 382–392 and 398–413; these read SESVSRGREPR and DTDR…RDHP. 2 disordered regions span residues 382 to 414 and 509 to 530; these read SESV…DHPC and RGRA…LVCQ. A compositionally biased stretch (basic residues) spans 510 to 524; the sequence is GRARRSKGKNKHSKR.

It belongs to the peptidase C19 family. USP17 subfamily.

The protein resides in the nucleus. It localises to the endoplasmic reticulum. It catalyses the reaction Thiol-dependent hydrolysis of ester, thioester, amide, peptide and isopeptide bonds formed by the C-terminal Gly of ubiquitin (a 76-residue protein attached to proteins as an intracellular targeting signal).. In terms of biological role, deubiquitinating enzyme that removes conjugated ubiquitin from specific proteins to regulate different cellular processes that may include cell proliferation, progression through the cell cycle, apoptosis, cell migration, and the cellular response to viral infection. This Homo sapiens (Human) protein is Ubiquitin carboxyl-terminal hydrolase 17-like protein 18 (USP17L18).